The sequence spans 434 residues: Asparagine--tRNA ligase (434 aa).

The protein belongs to the class-II aminoacyl-tRNA synthetase family.

The protein localises to the cytoplasm. The enzyme catalyses tRNA(Asn) + L-asparagine + ATP = L-asparaginyl-tRNA(Asn) + AMP + diphosphate + H(+). This Pyrococcus horikoshii (strain ATCC 700860 / DSM 12428 / JCM 9974 / NBRC 100139 / OT-3) protein is Asparagine--tRNA ligase.